A 429-amino-acid chain; its full sequence is MANVVVVGSQWGDEGKGKIVDWLSERADVIVRYQGGHNAGHTLVIDGVSYKLSLLPSGLVRGKLSVIGNGVVVDPHHFVAETEKLRAQGIDINPDVLRIAENAPLILSIHRDLDAMREGSNSGLKIGTTKRGIGPAYEDKVGRRAIRVIDLAEPETLQPKVERLLAHHNLLRRGMGLEEIAVETILTELTSVADQILPYIDQVWRVLDERRKAGDRILFEGAQGALLDNDHGTYPFVTSSNTVAGQAAAGSGLGPTAIGYVLGITKAYTTRVGEGPFPTELNDEIGEFLGTKGHEFGVVTGRKRRCGWFDAVIVRQTVRTSGITGIALTKLDVLDGLDEIKICVAYELDGKRIDYLPSSMGAQARVKPIYETLPGWSETTAGARSWNDLPAQAVKYVRHIEELIGAPVAMLSTSPEREDTILVTDPFHD.

Residues 12–18 and 40–42 contribute to the GTP site; these read GDEGKGK and GHT. Catalysis depends on aspartate 13, which acts as the Proton acceptor. Residues aspartate 13 and glycine 40 each contribute to the Mg(2+) site. Residues 13 to 16, 38 to 41, threonine 129, arginine 143, glutamine 223, threonine 238, and arginine 302 contribute to the IMP site; these read DEGK and NAGH. The Proton donor role is filled by histidine 41. 298–304 is a substrate binding site; sequence VVTGRKR. Residues arginine 304, 330-332, and 412-414 contribute to the GTP site; these read KLD and STS.

It belongs to the adenylosuccinate synthetase family. As to quaternary structure, homodimer. Mg(2+) is required as a cofactor.

The protein resides in the cytoplasm. It catalyses the reaction IMP + L-aspartate + GTP = N(6)-(1,2-dicarboxyethyl)-AMP + GDP + phosphate + 2 H(+). Its pathway is purine metabolism; AMP biosynthesis via de novo pathway; AMP from IMP: step 1/2. Functionally, plays an important role in the de novo pathway of purine nucleotide biosynthesis. Catalyzes the first committed step in the biosynthesis of AMP from IMP. This Brucella anthropi (strain ATCC 49188 / DSM 6882 / CCUG 24695 / JCM 21032 / LMG 3331 / NBRC 15819 / NCTC 12168 / Alc 37) (Ochrobactrum anthropi) protein is Adenylosuccinate synthetase.